A 125-amino-acid polypeptide reads, in one-letter code: Small ribosomal subunit protein bS6m (125 aa).

Belongs to the bacterial ribosomal protein bS6 family. As to quaternary structure, component of the mitochondrial ribosome small subunit (28S) which comprises a 12S rRNA and about 30 distinct proteins.

Its subcellular location is the mitochondrion. This Mus musculus (Mouse) protein is Small ribosomal subunit protein bS6m (Mrps6).